A 162-amino-acid chain; its full sequence is Dihydrofolate reductase (162 aa).

In terms of domain architecture, DHFR spans 3 to 161 (KITIIAACAE…VAYTFVHYLG (159 aa)). 7-9 (IAA) contributes to the substrate binding site. NADP(+) is bound by residues 8-9 (AA) and 16-21 (IGAGNA). Asp-29 is a substrate binding site. Residue 45–48 (GRKT) participates in NADP(+) binding. Residue Arg-60 participates in substrate binding. Residues 65 to 68 (ISRQ) and 98 to 103 (MGGAQI) contribute to the NADP(+) site. Thr-117 provides a ligand contact to substrate.

It belongs to the dihydrofolate reductase family.

It carries out the reaction (6S)-5,6,7,8-tetrahydrofolate + NADP(+) = 7,8-dihydrofolate + NADPH + H(+). The protein operates within cofactor biosynthesis; tetrahydrofolate biosynthesis; 5,6,7,8-tetrahydrofolate from 7,8-dihydrofolate: step 1/1. Key enzyme in folate metabolism. Catalyzes an essential reaction for de novo glycine and purine synthesis, and for DNA precursor synthesis. In Neisseria gonorrhoeae, this protein is Dihydrofolate reductase (folA).